The primary structure comprises 247 residues: ATP synthase subunit a 1 (247 aa).

6 helical membrane-spanning segments follow: residues 32 to 52 (YMLLAVVLIAGMMLAAGRALV), 82 to 102 (FFPLVFSLFMFIFVSNIVGII), 112 to 132 (IIVTFSLALLVFLTVIIYGFY), 141 to 161 (LFVPSGIPAVILPLVVVIEII), 181 to 201 (GHVTLKVFASFVTMLGALGFV), and 206 to 226 (ALLPLGLTVALTGLELMVAFL).

The protein belongs to the ATPase A chain family. In terms of assembly, F-type ATPases have 2 components, CF(1) - the catalytic core - and CF(0) - the membrane proton channel. CF(1) has five subunits: alpha(3), beta(3), gamma(1), delta(1), epsilon(1). CF(0) has four main subunits: a, b, b' and c.

It localises to the cell inner membrane. Its function is as follows. Key component of the proton channel; it plays a direct role in the translocation of protons across the membrane. This is ATP synthase subunit a 1 from Bradyrhizobium sp. (strain BTAi1 / ATCC BAA-1182).